The following is a 273-amino-acid chain: Outer surface protein A (273 aa).

Residues 1–16 (MKKYLLGIGLILALIA) form the signal peptide. A lipid anchor (N-palmitoyl cysteine) is attached at Cys-17. A lipid anchor (S-diacylglycerol cysteine) is attached at Cys-17.

The protein belongs to the OspA lipoprotein family.

It localises to the cell outer membrane. It is found in the cell surface. The chain is Outer surface protein A from Borreliella burgdorferi (strain N40) (Borrelia burgdorferi).